The primary structure comprises 392 residues: GDSL esterase/lipase ESM1 (392 aa).

The first 28 residues, 1 to 28 (MADNLNLVSVLGVLLVLTIFHNPIIVYA), serve as a signal peptide directing secretion. Ser43 (nucleophile) is an active-site residue. 3 N-linked (GlcNAc...) asparagine glycosylation sites follow: Asn146, Asn166, and Asn290. Catalysis depends on residues Asp324 and His327.

The protein belongs to the 'GDSL' lipolytic enzyme family.

The protein localises to the secreted. Represses or inhibits nitriles production from methionine-derived and from indol-3-ylmethyl glucosinolates. Favors isothiocyanate production. The protein is GDSL esterase/lipase ESM1 (ESM1) of Arabidopsis thaliana (Mouse-ear cress).